The sequence spans 288 residues: ATP synthase gamma chain (288 aa).

Belongs to the ATPase gamma chain family. F-type ATPases have 2 components, CF(1) - the catalytic core - and CF(0) - the membrane proton channel. CF(1) has five subunits: alpha(3), beta(3), gamma(1), delta(1), epsilon(1). CF(0) has three main subunits: a, b and c.

The protein localises to the cell membrane. In terms of biological role, produces ATP from ADP in the presence of a proton gradient across the membrane. The gamma chain is believed to be important in regulating ATPase activity and the flow of protons through the CF(0) complex. In Staphylococcus haemolyticus (strain JCSC1435), this protein is ATP synthase gamma chain.